Consider the following 617-residue polypeptide: MAALPRGSRGLPLLPLLLLLPPLGGPRGADGYFPEERWSPESPLQAPRVLIALLARNAAPALPATLGALEQLRHPRERTALWVATDHNTDNTSAILREWLVAVKGLYHSVEWRPAEEPSSYPDEEGPKHWSDSRYEHVMKLRQAALKSARDMWADYILFMDIDNLITNPDTLSLLIAENKTVVAPMLDSRAAYSNFWCGMTSQGYYKRTPAYIPIRKRDRRGCFAVPMVHSTFLIDLRKAASRNLAFYPTHPDYTWSFDDIIVFAFSCKQAEVQMYVCNKEVYGFLPVPLRAHSSLQDEAESFMHVQLEVMVKHPPVQLSRFISAPRKTSDKMGFDEVFMINLKRRRDRRERMLRALHEQEIDCQLVEAVDGKAMNTSQVEAMGIQMLPGYRDPYHGRPLTKGELGCFLSHYNIWKEVVDRGLQKSLVFEDDLRFEIFFKRRLMNLMRDVEREGLDWDLIYVGRKRMQVEHPEKAVPHVRNLVEADYSYWTLAYVISLQGAQKLLAAKPLAKMLPVDEFLPVMFDKHPMSEYKSHFSPRNLRAFSVEPLLIYPTHYTGDDGYVSDTETSVVWNNEQVKTDWDRAKSQKMREQQALSREAKNSDVLQSPLDSTARDEL.

A signal peptide spans 1 to 31 (MAALPRGSRGLPLLPLLLLLPPLGGPRGADG). Residues asparagine 91, asparagine 179, and asparagine 376 are each glycosylated (N-linked (GlcNAc...) asparagine). Positions 582–601 (DRAKSQKMREQQALSREAKN) are enriched in basic and acidic residues. Positions 582–617 (DRAKSQKMREQQALSREAKNSDVLQSPLDSTARDEL) are disordered. A Prevents secretion from ER motif is present at residues 614–617 (RDEL).

This sequence belongs to the glycosyltransferase 25 family. In terms of processing, N-glycosylated.

The protein localises to the endoplasmic reticulum lumen. The catalysed reaction is (5R)-5-hydroxy-L-lysyl-[collagen] + UDP-alpha-D-galactose = (5R)-5-O-(beta-D-galactosyl)-5-hydroxy-L-lysyl-[collagen] + UDP + H(+). In terms of biological role, beta-galactosyltransferase that transfers beta-galactose to hydroxylysine residues of type I collagen. By acting on collagen glycosylation, facilitates the formation of collagen triple helix. Also involved in the biosynthesis of collagen type IV. In Mus musculus (Mouse), this protein is Procollagen galactosyltransferase 1 (Colgalt1).